A 65-amino-acid polypeptide reads, in one-letter code: Ubiquinol-cytochrome-c reductase complex assembly factor 6 (65 aa).

The Mitochondrial matrix portion of the chain corresponds to Met1–Arg9. The chain crosses the membrane as a helical; Signal-anchor for type II membrane protein span at residues Tyr10–Tyr32. At Arg33 to Gln65 the chain is on the mitochondrial intermembrane side.

This sequence belongs to the UQCC6 family. Highly expressed in skeletal and cardiac muscle (at protein level).

The protein resides in the mitochondrion inner membrane. Required for the assembly and stability of the mitochondrial ubiquinol-cytochrome c reductase complex (complex III (CIII) or cytochrome b-c1 complex), a multisubunit transmembrane complex that is part of the mitochondrial electron transport chain (ETC) which drives oxidative phosphorylation. Mediates early complex III biogenesis. Participates in regulating the levels of electron transport chain proteins, and therefore energy supply, in response to changes in energy demand. Also required for cytochrome c oxidase complex (complex IV) assembly. This is Ubiquinol-cytochrome-c reductase complex assembly factor 6 (uqcc6) from Danio rerio (Zebrafish).